The sequence spans 123 residues: Large ribosomal subunit protein bL20 (123 aa).

Belongs to the bacterial ribosomal protein bL20 family.

Its function is as follows. Binds directly to 23S ribosomal RNA and is necessary for the in vitro assembly process of the 50S ribosomal subunit. It is not involved in the protein synthesizing functions of that subunit. In Ehrlichia ruminantium (strain Gardel), this protein is Large ribosomal subunit protein bL20.